A 431-amino-acid polypeptide reads, in one-letter code: Glutamate--tRNA ligase 1 (431 aa).

Positions 11 to 21 match the 'HIGH' region motif; it reads PSPTGDLHLGG. Positions 203–207 match the 'KMSKS' region motif; it reads KLSKR. An ATP-binding site is contributed by Lys206.

This sequence belongs to the class-I aminoacyl-tRNA synthetase family. Glutamate--tRNA ligase type 1 subfamily. As to quaternary structure, monomer.

It localises to the cytoplasm. The enzyme catalyses tRNA(Glu) + L-glutamate + ATP = L-glutamyl-tRNA(Glu) + AMP + diphosphate. In terms of biological role, catalyzes the attachment of glutamate to tRNA(Glu) in a two-step reaction: glutamate is first activated by ATP to form Glu-AMP and then transferred to the acceptor end of tRNA(Glu). The protein is Glutamate--tRNA ligase 1 of Rubrobacter xylanophilus (strain DSM 9941 / JCM 11954 / NBRC 16129 / PRD-1).